A 409-amino-acid chain; its full sequence is Ingression protein 1 (409 aa).

The C2 domain maps to 1-114; that stretch reads MSEEVWNGNQ…DPKEGYCTWY (114 aa). The interval 300 to 409 is disordered; it reads LSYDEDDDDD…TRKRPPPRLS (110 aa). Acidic residues predominate over residues 302 to 313; it reads YDEDDDDDDEND. A compositionally biased stretch (polar residues) spans 315-328; sequence FYSSSHRVSHNYNQ. Over residues 360 to 377 the composition is skewed to low complexity; that stretch reads LDSSSPNSHPHPSGLNSP. Residues 384–399 show a composition bias toward polar residues; the sequence is TTSNSNFNSRKNSMSP. The residue at position 392 (Ser-392) is a Phosphoserine. Over residues 400-409 the composition is skewed to basic residues; that stretch reads TRKRPPPRLS.

Belongs to the INN1/fic1 family. Interacts with CYK2, CYK3 and IQG1.

It is found in the bud neck. Required for the ingression of the plasma membrane into the bud neck at the end of cytokinesis, leading to the separation of the mother and daughter cells. Stimulates the synthesis of the primary septum (PS) by CHS2. In Saccharomyces cerevisiae (strain ATCC 204508 / S288c) (Baker's yeast), this protein is Ingression protein 1 (INN1).